A 143-amino-acid polypeptide reads, in one-letter code: Midkine (143 aa).

An N-terminal signal peptide occupies residues 1–20 (MQHRGFLLLTLLALLALTSA). Disulfide bonds link C37/C61, C45/C70, C52/C74, C84/C116, and C94/C126.

The protein belongs to the pleiotrophin family. As to quaternary structure, homodimer. Interacts with ALK. Interacts with LRP1; promotes neuronal survival. Interacts with LRP2. Interacts with NCAM1. Interacts (via C-terminal) with PTPRZ1 (via chondroitin sulfate chains); this interaction is inhibited by PTN; this interaction promotes neuronal migration. Interacts with NCL; this interaction promotes NCL clustering and lateral movements of this complex into lipid rafts leading to MDK internalization. Interacts with LRP6 and LRP8: this interaction is calcium dependent. Interacts with ITGA4. Interacts with ITGA6. Interacts with ITGB1. Interacts with ITGA4:ITGB1 complex; this interaction mediates MDK-induced osteoblast cells migration through PXN phosphorylation. Interacts with ITGA6:ITGB1 complex; this interaction mediates MDK-induced neurite outgrowth. Interacts with NOTCH2; this interaction mediates a nuclear accumulation of NOTCH2 and therefore activation of NOTCH2 signaling leading to interaction between HES1 and STAT3. Interacts with GPC2 (via heparan sulfate chain); this interaction is inhibited by heparin followed by chondroitin sulfate E; this interaction induces GPC2 clustering through heparan sulfate chain; this interaction induces neuronal cell adhesion and neurite outgrowth. Interacts with SDC3; this interaction induces SDC3 clustering; this interaction induces neuronal cell adhesion and neurite outgrowth. Interacts with SDC1. Interacts with CSPG5; this interaction promotes elongation of oligodendroglial precursor-like cells. As to expression, expressed in various tumor cell lines. In insulinoma tissue predominantly expressed in precancerous lesions.

It localises to the secreted. Secreted protein that functions as a cytokine and growth factor and mediates its signal through cell-surface proteoglycan and non-proteoglycan receptors. Binds cell-surface proteoglycan receptors via their chondroitin sulfate (CS) groups. Thereby regulates many processes like inflammatory response, cell proliferation, cell adhesion, cell growth, cell survival, tissue regeneration, cell differentiation and cell migration. Participates in inflammatory processes by exerting two different activities. Firstly, mediates neutrophils and macrophages recruitment to the sites of inflammation both by direct action by cooperating namely with ITGB2 via LRP1 and by inducing chemokine expression. This inflammation can be accompanied by epithelial cell survival and smooth muscle cell migration after renal and vessel damage, respectively. Secondly, suppresses the development of tolerogenic dendric cells thereby inhibiting the differentiation of regulatory T cells and also promote T cell expansion through NFAT signaling and Th1 cell differentiation. Promotes tissue regeneration after injury or trauma. After heart damage negatively regulates the recruitment of inflammatory cells and mediates cell survival through activation of anti-apoptotic signaling pathways via MAPKs and AKT pathways through the activation of angiogenesis. Also facilitates liver regeneration as well as bone repair by recruiting macrophage at trauma site and by promoting cartilage development by facilitating chondrocyte differentiation. Plays a role in brain by promoting neural precursor cells survival and growth through interaction with heparan sulfate proteoglycans. Binds PTPRZ1 and promotes neuronal migration and embryonic neurons survival. Binds SDC3 or GPC2 and mediates neurite outgrowth and cell adhesion. Binds chondroitin sulfate E and heparin leading to inhibition of neuronal cell adhesion induced by binding with GPC2. Binds CSPG5 and promotes elongation of oligodendroglial precursor-like cells. Also binds ITGA6:ITGB1 complex; this interaction mediates MDK-induced neurite outgrowth. Binds LRP1; promotes neuronal survival. Binds ITGA4:ITGB1 complex; this interaction mediates MDK-induced osteoblast cells migration through PXN phosphorylation. Binds anaplastic lymphoma kinase (ALK) which induces ALK activation and subsequent phosphorylation of the insulin receptor substrate (IRS1), followed by the activation of mitogen-activated protein kinase (MAPK) and PI3-kinase, and the induction of cell proliferation. Promotes epithelial to mesenchymal transition through interaction with NOTCH2. During arteriogenesis, plays a role in vascular endothelial cell proliferation by inducing VEGFA expression and release which in turn induces nitric oxide synthase expression. Moreover activates vasodilation through nitric oxide synthase activation. Negatively regulates bone formation in response to mechanical load by inhibiting Wnt/beta-catenin signaling in osteoblasts. In addition plays a role in hippocampal development, working memory, auditory response, early fetal adrenal gland development and the female reproductive system. This chain is Midkine, found in Homo sapiens (Human).